A 266-amino-acid chain; its full sequence is Metallo-beta-lactamase VIM-1 (266 aa).

Residues 1 to 20 form the signal peptide; it reads MLKVISSLLVYMTASVMAVA. Residues His-114, His-116, Asp-118, His-179, Cys-198, and His-240 each contribute to the Zn(2+) site.

Belongs to the metallo-beta-lactamase superfamily. Class-B beta-lactamase family. In terms of assembly, monomer. Zn(2+) is required as a cofactor.

The protein resides in the periplasm. It carries out the reaction a beta-lactam + H2O = a substituted beta-amino acid. With respect to regulation, weakly inhibited by beta-lactamase-blocking agent sulbactam. Functionally, class B beta-lactamase which confers resistance to the beta-lactam antibiotics, including penicillins, cephalosporins and carbapenems. Acts via hydrolysis of the beta-lactam ring. Has penicillin-, cephalosporin- and carbapenem-hydrolyzing activities. This Pseudomonas aeruginosa (strain ATCC 15692 / DSM 22644 / CIP 104116 / JCM 14847 / LMG 12228 / 1C / PRS 101 / PAO1) protein is Metallo-beta-lactamase VIM-1.